The chain runs to 697 residues: Long-chain-fatty-acid--CoA ligase 6 (697 aa).

A helical; Signal-anchor for type III membrane protein membrane pass occupies residues 25–45 (LSATTLVSMGALAAILAYWFT). Topologically, residues 46–697 (HRPKALQPPC…QIEELYSISM (652 aa)) are cytoplasmic.

It belongs to the ATP-dependent AMP-binding enzyme family. Mg(2+) is required as a cofactor. As to expression, expressed predominantly in erythrocyte precursors, in particular in reticulocytes, fetal blood cells derived from fetal liver, hemopoietic stem cells from cord blood, bone marrow and brain.

The protein resides in the mitochondrion outer membrane. The protein localises to the peroxisome membrane. Its subcellular location is the microsome membrane. It is found in the endoplasmic reticulum membrane. The enzyme catalyses a long-chain fatty acid + ATP + CoA = a long-chain fatty acyl-CoA + AMP + diphosphate. It catalyses the reaction (5Z,8Z,11Z,14Z)-eicosatetraenoate + ATP + CoA = (5Z,8Z,11Z,14Z)-eicosatetraenoyl-CoA + AMP + diphosphate. The catalysed reaction is hexadecanoate + ATP + CoA = hexadecanoyl-CoA + AMP + diphosphate. It carries out the reaction (E)-hexadec-2-enoate + ATP + CoA = (2E)-hexadecenoyl-CoA + AMP + diphosphate. The enzyme catalyses 15-hydroxy-(5Z,8Z,11Z,13E)-eicosatetraenoate + ATP + CoA = 15-hydroxy-(5Z,8Z,11Z,13E)-eicosatetraenoyl-CoA + AMP + diphosphate. It catalyses the reaction 12-hydroxy-(5Z,8Z,10E,14Z)-eicosatetraenoate + ATP + CoA = 12-hydroxy-(5Z,8Z,10E,14Z)-eicosatetraenoyl-CoA + AMP + diphosphate. The catalysed reaction is 5-hydroxy-(6E,8Z,11Z,14Z)-eicosatetraenoate + ATP + CoA = 5-hydroxy-(6E,8Z,11Z,14Z)-eicosatetraenoyl-CoA + AMP + diphosphate. Functionally, catalyzes the conversion of long-chain fatty acids to their active form acyl-CoA for both synthesis of cellular lipids, and degradation via beta-oxidation. Plays an important role in fatty acid metabolism in brain and the acyl-CoAs produced may be utilized exclusively for the synthesis of the brain lipid. This chain is Long-chain-fatty-acid--CoA ligase 6, found in Homo sapiens (Human).